Here is a 165-residue protein sequence, read N- to C-terminus: Large ribosomal subunit protein uL10 (165 aa).

The protein belongs to the universal ribosomal protein uL10 family. In terms of assembly, part of the ribosomal stalk of the 50S ribosomal subunit. The N-terminus interacts with L11 and the large rRNA to form the base of the stalk. The C-terminus forms an elongated spine to which L12 dimers bind in a sequential fashion forming a multimeric L10(L12)X complex.

Functionally, forms part of the ribosomal stalk, playing a central role in the interaction of the ribosome with GTP-bound translation factors. The protein is Large ribosomal subunit protein uL10 of Enterobacter sp. (strain 638).